The sequence spans 794 residues: Protein sel-1 homolog 1 (794 aa).

An N-terminal signal peptide occupies residues 1 to 21; sequence MQVRVRLLLLLCAVLLGSAAA. Residues 22-737 form an interaction with ERLEC1, OS9 and SYVN1 region; it reads SSDEETNQDE…DLFTQLDMDQ (716 aa). The Lumenal segment spans residues 22 to 738; the sequence is SSDEETNQDE…LFTQLDMDQL (717 aa). Positions 23-32 are enriched in acidic residues; sequence SDEETNQDES. 2 disordered regions span residues 23 to 46 and 73 to 105; these read SDEETNQDESLDSKGALPTDGSVK and QDEEESSKSQEEVSVTEDISFLDSPNPSSKTYE. The Fibronectin type-II domain maps to 122-170; it reads AHGEPCHFPFLFLDKEYDECTSDGREDGRLWCATTYDYKTDEKWGFCET. Disulfide bonds link Cys-127–Cys-153 and Cys-141–Cys-168. Sel1-like repeat units follow at residues 183–218, 219–254, 255–290, 291–326, 373–409, 410–446, 447–482, 483–518, and 519–554; these read AEAIYQSGMKILNGSTRKNQKREAYRYLQKAAGMNH, TKALERVSYALLFGDYLTQNIQAAKEMFEKLTEEGS, PKGQTGLGFLYASGLGVNSSQAKALVYYTFGALGGN, LIAHMVLGYRYWAGIGVLQSCESALTHYRLVANHVA, VQAQVGLGQLHLHGGRGVEQNHQRAFDYFNLAANAGN, SHAMAFLGKMYSEGSDIVPQSNETALHYFKKAADMGN, PVGQSGLGMAYLYGRGVQVNYDLALKYFQKAAEQGW, VDGQLQLGSMYYNGIGVKRDYKQALKYFNLASQGGH, and ILAFYNLAQMHASGTGVMRSCHTAVELFKNVCERGR. Asn-195 and Asn-217 each carry an N-linked (GlcNAc...) asparagine glycan. Residue Asn-272 is glycosylated (N-linked (GlcNAc...) asparagine). The tract at residues 352–537 is important for homodimerization and oligomerization; the sequence is NSGMLEEDLI…MHASGTGVMR (186 aa). Asn-431 carries an N-linked (GlcNAc...) asparagine glycan. Asn-608 carries N-linked (GlcNAc...) asparagine glycosylation. Sel1-like repeat units lie at residues 627–662 and 664–699; these read TVARIKLGDYHFYGFGTDVDYETAFIHYRLASEQQH and AQAMFNLGYMHEKGLGIKQDIHLAKRFYDMAAEASP. An interaction with SYVN1 region spans residues 643–723; it reads TDVDYETAFI…VVYFLQYIRE (81 aa). A mediates retention in the endoplasmic reticulum region spans residues 738–794; it reads LLGPEWDLYLMTIIALLLGTVIAYRQRQHQDIPVPRPPGPRPAPPQQEGPPEQQPPQ. The helical transmembrane segment at 739–759 threads the bilayer; it reads LGPEWDLYLMTIIALLLGTVI. Over 760 to 794 the chain is Cytoplasmic; that stretch reads AYRQRQHQDIPVPRPPGPRPAPPQQEGPPEQQPPQ. The tract at residues 767–794 is disordered; it reads QDIPVPRPPGPRPAPPQQEGPPEQQPPQ. Positions 771 to 794 are enriched in pro residues; it reads VPRPPGPRPAPPQQEGPPEQQPPQ.

The protein belongs to the sel-1 family. As to quaternary structure, homodimer and homooligomer. May form a complex with ERLEC1, HSPA5, OS9, and SYVN1. Interacts with FOXRED2 and EDEM1. Interacts with LPL and LMF1; may stabilize the complex formed by LPL and LMF1 and thereby promote the export of LPL dimers. Component of the HRD1 complex, which comprises at least SYNV1/HRD1, DERL1/2, FAM8A1, HERPUD1/HERP, OS9, SEL1L and UBE2J1. SYNV1 assembles with SEL1L and FAM8A1 through its transmembrane domains, but interaction with its cytoplasmic domain is required to confer stability to FAM8A1 and enhance recruitment of HERPUD1. The interaction with SYNV1/HRD1 is direct. N-glycosylated.

Its subcellular location is the endoplasmic reticulum membrane. In terms of biological role, plays a role in the endoplasmic reticulum quality control (ERQC) system also called ER-associated degradation (ERAD) involved in ubiquitin-dependent degradation of misfolded endoplasmic reticulum proteins. Enhances SYVN1 stability. Plays a role in LPL maturation and secretion. Required for normal differentiation of the pancreas epithelium, and for normal exocrine function and survival of pancreatic cells. May play a role in Notch signaling. This is Protein sel-1 homolog 1 (Sel1l) from Rattus norvegicus (Rat).